The sequence spans 371 residues: 4-hydroxy-3-methylbut-2-en-1-yl diphosphate synthase (flavodoxin) (371 aa).

The [4Fe-4S] cluster site is built by Cys268, Cys271, Cys303, and Glu310.

This sequence belongs to the IspG family. [4Fe-4S] cluster serves as cofactor.

The enzyme catalyses (2E)-4-hydroxy-3-methylbut-2-enyl diphosphate + oxidized [flavodoxin] + H2O + 2 H(+) = 2-C-methyl-D-erythritol 2,4-cyclic diphosphate + reduced [flavodoxin]. Its pathway is isoprenoid biosynthesis; isopentenyl diphosphate biosynthesis via DXP pathway; isopentenyl diphosphate from 1-deoxy-D-xylulose 5-phosphate: step 5/6. Functionally, converts 2C-methyl-D-erythritol 2,4-cyclodiphosphate (ME-2,4cPP) into 1-hydroxy-2-methyl-2-(E)-butenyl 4-diphosphate. In Macrococcus caseolyticus (strain JCSC5402) (Macrococcoides caseolyticum), this protein is 4-hydroxy-3-methylbut-2-en-1-yl diphosphate synthase (flavodoxin).